A 125-amino-acid chain; its full sequence is Fluoride-specific ion channel FluC (125 aa).

4 helical membrane passes run 4 to 24, 36 to 56, 68 to 88, and 100 to 120; these read PLLA…LLAV, GTLL…AWFA, LITT…LEVV, and VISV…GFWL. Residues Gly-75 and Thr-78 each coordinate Na(+).

Belongs to the fluoride channel Fluc/FEX (TC 1.A.43) family.

The protein localises to the cell inner membrane. The catalysed reaction is fluoride(in) = fluoride(out). Na(+) is not transported, but it plays an essential structural role and its presence is essential for fluoride channel function. Fluoride-specific ion channel. Important for reducing fluoride concentration in the cell, thus reducing its toxicity. This Erwinia tasmaniensis (strain DSM 17950 / CFBP 7177 / CIP 109463 / NCPPB 4357 / Et1/99) protein is Fluoride-specific ion channel FluC.